A 255-amino-acid chain; its full sequence is tRNA (guanine-N(1)-)-methyltransferase (255 aa).

Residues G117 and 137-142 (IGDYVL) each bind S-adenosyl-L-methionine.

Belongs to the RNA methyltransferase TrmD family. Homodimer.

It is found in the cytoplasm. The enzyme catalyses guanosine(37) in tRNA + S-adenosyl-L-methionine = N(1)-methylguanosine(37) in tRNA + S-adenosyl-L-homocysteine + H(+). Functionally, specifically methylates guanosine-37 in various tRNAs. The polypeptide is tRNA (guanine-N(1)-)-methyltransferase (Chromobacterium violaceum (strain ATCC 12472 / DSM 30191 / JCM 1249 / CCUG 213 / NBRC 12614 / NCIMB 9131 / NCTC 9757 / MK)).